Reading from the N-terminus, the 617-residue chain is V-type proton ATPase catalytic subunit A (617 aa).

ATP is bound at residue 250-257 (GAFGCGKT).

Belongs to the ATPase alpha/beta chains family. V-ATPase is a heteromultimeric enzyme made up of two complexes: the ATP-hydrolytic V1 complex and the proton translocation V0 complex. The V1 complex consists of three catalytic AB heterodimers that form a heterohexamer, three peripheral stalks each consisting of EG heterodimers, one central rotor including subunits D and F, and the regulatory subunits C and H. The proton translocation complex V0 consists of the proton transport subunit a, a ring of proteolipid subunits c9c'', rotary subunit d, subunits e and f, and the accessory subunits VhaAC45 and ATP6AP2.

It carries out the reaction ATP + H2O + 4 H(+)(in) = ADP + phosphate + 5 H(+)(out). Its activity is regulated as follows. ATP hydrolysis occurs at the interface between the nucleotide-binding domains of subunits A and B. ATP hydrolysis triggers a conformational change in the subunits D and F, which induces a shift of subunit d. The c-ring is subsequently rotated and results in a continuous proton translocation across the membrane. Its function is as follows. Catalytic subunit of the V1 complex of vacuolar(H+)-ATPase (V-ATPase), a multisubunit enzyme composed of a peripheral complex (V1) that hydrolyzes ATP and a membrane integral complex (V0) that translocates protons. V-ATPase is responsible for acidifying and maintaining the pH of intracellular compartments and in some cell types, is targeted to the plasma membrane, where it is responsible for acidifying the extracellular environment. In Manduca sexta (Tobacco hawkmoth), this protein is V-type proton ATPase catalytic subunit A (VHAA).